Reading from the N-terminus, the 467-residue chain is Glycogen synthase (467 aa).

Lys-15 contacts ADP-alpha-D-glucose.

Belongs to the glycosyltransferase 1 family. Bacterial/plant glycogen synthase subfamily.

The catalysed reaction is [(1-&gt;4)-alpha-D-glucosyl](n) + ADP-alpha-D-glucose = [(1-&gt;4)-alpha-D-glucosyl](n+1) + ADP + H(+). It functions in the pathway glycan biosynthesis; glycogen biosynthesis. Its function is as follows. Synthesizes alpha-1,4-glucan chains using ADP-glucose. This chain is Glycogen synthase, found in Desulfitobacterium hafniense (strain DSM 10664 / DCB-2).